We begin with the raw amino-acid sequence, 1088 residues long: Platelet-derived growth factor receptor alpha (1088 aa).

The first 23 residues, 1–23 (MGTSQAFLVLSCLLTGPSLIVCQ), serve as a signal peptide directing secretion. 5 consecutive Ig-like C2-type domains span residues 24–112 (LLLP…SEIE), 116–200 (IYIY…FKTS), 201–305 (EFNV…KTVT), 318–409 (PTFG…FELS), and 413–516 (PASI…LKLV). Over 24-527 (LLLPSILPNE…PSLRSELTVA (504 aa)) the chain is Extracellular. Residues Cys-48 and Cys-99 are joined by a disulfide bond. N-linked (GlcNAc...) asparagine glycosylation is found at Asn-75, Asn-102, and Asn-178. 2 cysteine pairs are disulfide-bonded: Cys-149–Cys-188 and Cys-234–Cys-289. 4 N-linked (GlcNAc...) asparagine glycosylation sites follow: Asn-352, Asn-358, Asn-457, and Asn-467. Residues Cys-434 and Cys-500 are joined by a disulfide bond. A helical transmembrane segment spans residues 528 to 548 (AAVLVLLVIVIVSLIVLVVIW). Residues 549–1088 (KQKPRYEIRW…SSDLVEDSFL (540 aa)) are Cytoplasmic-facing. A phosphotyrosine; by autocatalysis mark is found at Tyr-571 and Tyr-573. Residues 592–953 (LVLGRILGSG…HLSEIVENLL (362 aa)) enclose the Protein kinase domain. Residues 598 to 606 (LGSGAFGKV) and Lys-626 contribute to the ATP site. A phosphotyrosine; by autocatalysis mark is found at Tyr-719, Tyr-730, Tyr-741, Tyr-753, Tyr-761, and Tyr-767. Asp-817 (proton acceptor) is an active-site residue. Residues Tyr-848, Tyr-987, and Tyr-1017 each carry the phosphotyrosine; by autocatalysis modification. The segment at 1017 to 1088 (YIIPLPDIDP…SSDLVEDSFL (72 aa)) is disordered. Residues 1040 to 1058 (SSQTSEESAIETGSSSSTF) show a composition bias toward polar residues. Residues 1064–1088 (ETIEDIDMMDDIGIDSSDLVEDSFL) are compositionally biased toward acidic residues.

Belongs to the protein kinase superfamily. Tyr protein kinase family. CSF-1/PDGF receptor subfamily. In terms of assembly, interacts with homodimeric PDGFA, PDGFB and PDGFC, and with heterodimers formed by PDGFA and PDGFB. Monomer in the absence of bound ligand. Interaction with dimeric PDGFA, PDGFB and/or PDGFC leads to receptor dimerization, where both PDGFRA homodimers and heterodimers with PDGFRB are observed. Interacts (tyrosine phosphorylated) with SHB (via SH2 domain). Interacts (tyrosine phosphorylated) with SHF (via SH2 domain). Interacts (tyrosine phosphorylated) with SRC (via SH2 domain). Interacts (tyrosine phosphorylated) with PIK3R1. Interacts (tyrosine phosphorylated) with PLCG1 (via SH2 domain). Interacts (tyrosine phosphorylated) with CRK, GRB2 and GRB7. Interacts with CD248; this interaction promotes PDGF receptor signaling pathway. In terms of processing, ubiquitinated, leading to its internalization and degradation. Post-translationally, autophosphorylated on tyrosine residues upon ligand binding. Autophosphorylation occurs in trans, i.e. one subunit of the dimeric receptor phosphorylates tyrosine residues on the other subunit. Phosphorylation at Tyr-730 and Tyr-741 is important for interaction with PIK3R1. Phosphorylation at Tyr-719 and Tyr-753 is important for interaction with PTPN11. Phosphorylation at Tyr-761 is important for interaction with CRK. Phosphorylation at Tyr-571 and Tyr-573 is important for interaction with SRC and SRC family members. Phosphorylation at Tyr-987 and Tyr-1017 is important for interaction with PLCG1.

It is found in the cell membrane. It localises to the cell projection. Its subcellular location is the cilium. The protein localises to the golgi apparatus. It carries out the reaction L-tyrosyl-[protein] + ATP = O-phospho-L-tyrosyl-[protein] + ADP + H(+). Its activity is regulated as follows. Present in an inactive conformation in the absence of bound ligand. Binding of PDGFA and/or PDGFB leads to dimerization and activation by autophosphorylation on tyrosine residues. Inhibited by imatinib, nilotinib and sorafenib. Functionally, tyrosine-protein kinase that acts as a cell-surface receptor for PDGFA, PDGFB and PDGFC and plays an essential role in the regulation of embryonic development, cell proliferation, survival and chemotaxis. Depending on the context, promotes or inhibits cell proliferation and cell migration. Plays an important role in the differentiation of bone marrow-derived mesenchymal stem cells. Required for normal skeleton development and cephalic closure during embryonic development. Required for normal development of the mucosa lining the gastrointestinal tract, and for recruitment of mesenchymal cells and normal development of intestinal villi. Plays a role in cell migration and chemotaxis in wound healing. Plays a role in platelet activation, secretion of agonists from platelet granules, and in thrombin-induced platelet aggregation. Binding of its cognate ligands - homodimeric PDGFA, homodimeric PDGFB, heterodimers formed by PDGFA and PDGFB or homodimeric PDGFC -leads to the activation of several signaling cascades; the response depends on the nature of the bound ligand and is modulated by the formation of heterodimers between PDGFRA and PDGFRB. Phosphorylates PIK3R1, PLCG1, and PTPN11. Activation of PLCG1 leads to the production of the cellular signaling molecules diacylglycerol and inositol 1,4,5-trisphosphate, mobilization of cytosolic Ca(2+) and the activation of protein kinase C. Phosphorylates PIK3R1, the regulatory subunit of phosphatidylinositol 3-kinase, and thereby mediates activation of the AKT1 signaling pathway. Mediates activation of HRAS and of the MAP kinases MAPK1/ERK2 and/or MAPK3/ERK1. Promotes activation of STAT family members STAT1, STAT3 and STAT5A and/or STAT5B. Receptor signaling is down-regulated by protein phosphatases that dephosphorylate the receptor and its down-stream effectors, and by rapid internalization of the activated receptor. The chain is Platelet-derived growth factor receptor alpha (Pdgfra) from Rattus norvegicus (Rat).